The primary structure comprises 313 residues: Ribosomal RNA small subunit methyltransferase H (313 aa).

S-adenosyl-L-methionine contacts are provided by residues 35-37 (GGH), D55, F81, D103, and Q110.

This sequence belongs to the methyltransferase superfamily. RsmH family.

The protein resides in the cytoplasm. It carries out the reaction cytidine(1402) in 16S rRNA + S-adenosyl-L-methionine = N(4)-methylcytidine(1402) in 16S rRNA + S-adenosyl-L-homocysteine + H(+). Specifically methylates the N4 position of cytidine in position 1402 (C1402) of 16S rRNA. The sequence is that of Ribosomal RNA small subunit methyltransferase H from Pseudomonas paraeruginosa (strain DSM 24068 / PA7) (Pseudomonas aeruginosa (strain PA7)).